Here is a 500-residue protein sequence, read N- to C-terminus: Lysine--tRNA ligase (500 aa).

2 residues coordinate Mg(2+): E410 and E417.

It belongs to the class-II aminoacyl-tRNA synthetase family. In terms of assembly, homodimer. Mg(2+) serves as cofactor.

Its subcellular location is the cytoplasm. It catalyses the reaction tRNA(Lys) + L-lysine + ATP = L-lysyl-tRNA(Lys) + AMP + diphosphate. The chain is Lysine--tRNA ligase from Shewanella frigidimarina (strain NCIMB 400).